A 362-amino-acid polypeptide reads, in one-letter code: GTP cyclohydrolase FolE2 (362 aa).

The protein belongs to the GTP cyclohydrolase IV family.

The catalysed reaction is GTP + H2O = 7,8-dihydroneopterin 3'-triphosphate + formate + H(+). Its pathway is cofactor biosynthesis; 7,8-dihydroneopterin triphosphate biosynthesis; 7,8-dihydroneopterin triphosphate from GTP: step 1/1. In terms of biological role, converts GTP to 7,8-dihydroneopterin triphosphate. In Jannaschia sp. (strain CCS1), this protein is GTP cyclohydrolase FolE2.